The following is a 555-amino-acid chain: Urocanate hydratase (555 aa).

Residues 51-52 (GG), Gln-129, 175-177 (GMG), Glu-195, 241-242 (NA), 262-266 (QTSAH), 272-273 (YL), and Tyr-321 each bind NAD(+). Cys-409 is an active-site residue. Gly-491 is a binding site for NAD(+).

The protein belongs to the urocanase family. Requires NAD(+) as cofactor.

It localises to the cytoplasm. The enzyme catalyses 4-imidazolone-5-propanoate = trans-urocanate + H2O. It participates in amino-acid degradation; L-histidine degradation into L-glutamate; N-formimidoyl-L-glutamate from L-histidine: step 2/3. In terms of biological role, catalyzes the conversion of urocanate to 4-imidazolone-5-propionate. The protein is Urocanate hydratase of Hyphomonas neptunium (strain ATCC 15444).